The primary structure comprises 227 residues: Cytochrome c oxidase subunit 2 (227 aa).

Residues 1–14 are Mitochondrial intermembrane-facing; the sequence is MAYPFQLGLQDATS. The chain crosses the membrane as a helical span at residues 15 to 45; that stretch reads PIMEELLHFHDHTLMIVFLISSLVLYIISLM. Over 46–59 the chain is Mitochondrial matrix; the sequence is LTTKLTHTSTMDAQ. The helical transmembrane segment at 60–87 threads the bilayer; sequence EVETVWTILPAIILVLIALPSLRILYMM. The Mitochondrial intermembrane portion of the chain corresponds to 88–227; it reads DEINNPSLTV…YFETWSALMV (140 aa). The Cu cation site is built by H161, C196, E198, C200, H204, and M207. E198 is a binding site for Mg(2+). A Phosphotyrosine modification is found at Y218.

This sequence belongs to the cytochrome c oxidase subunit 2 family. In terms of assembly, component of the cytochrome c oxidase (complex IV, CIV), a multisubunit enzyme composed of 14 subunits. The complex is composed of a catalytic core of 3 subunits MT-CO1, MT-CO2 and MT-CO3, encoded in the mitochondrial DNA, and 11 supernumerary subunits COX4I, COX5A, COX5B, COX6A, COX6B, COX6C, COX7A, COX7B, COX7C, COX8 and NDUFA4, which are encoded in the nuclear genome. The complex exists as a monomer or a dimer and forms supercomplexes (SCs) in the inner mitochondrial membrane with NADH-ubiquinone oxidoreductase (complex I, CI) and ubiquinol-cytochrome c oxidoreductase (cytochrome b-c1 complex, complex III, CIII), resulting in different assemblies (supercomplex SCI(1)III(2)IV(1) and megacomplex MCI(2)III(2)IV(2)). Found in a complex with TMEM177, COA6, COX18, COX20, SCO1 and SCO2. Interacts with TMEM177 in a COX20-dependent manner. Interacts with COX20. Interacts with COX16. Cu cation is required as a cofactor.

The protein resides in the mitochondrion inner membrane. It catalyses the reaction 4 Fe(II)-[cytochrome c] + O2 + 8 H(+)(in) = 4 Fe(III)-[cytochrome c] + 2 H2O + 4 H(+)(out). Functionally, component of the cytochrome c oxidase, the last enzyme in the mitochondrial electron transport chain which drives oxidative phosphorylation. The respiratory chain contains 3 multisubunit complexes succinate dehydrogenase (complex II, CII), ubiquinol-cytochrome c oxidoreductase (cytochrome b-c1 complex, complex III, CIII) and cytochrome c oxidase (complex IV, CIV), that cooperate to transfer electrons derived from NADH and succinate to molecular oxygen, creating an electrochemical gradient over the inner membrane that drives transmembrane transport and the ATP synthase. Cytochrome c oxidase is the component of the respiratory chain that catalyzes the reduction of oxygen to water. Electrons originating from reduced cytochrome c in the intermembrane space (IMS) are transferred via the dinuclear copper A center (CU(A)) of subunit 2 and heme A of subunit 1 to the active site in subunit 1, a binuclear center (BNC) formed by heme A3 and copper B (CU(B)). The BNC reduces molecular oxygen to 2 water molecules using 4 electrons from cytochrome c in the IMS and 4 protons from the mitochondrial matrix. This chain is Cytochrome c oxidase subunit 2 (MT-CO2), found in Cerdocyon thous (Crab-eating fox).